A 482-amino-acid chain; its full sequence is ADP-ribosylation factor GTPase-activating protein effector protein 1 (482 aa).

Residues 116–156 form a disordered region; sequence QHKSTHSHHINHQTHPIHSSSSNSNSNNRIPTKTDSSKQHT. The span at 118–127 shows a compositional bias: basic residues; it reads KSTHSHHINH. The segment covering 134–143 has biased composition (low complexity); it reads SSSSNSNSNN. The region spanning 170 to 297 is the Arf-GAP domain; that stretch reads DELLSIVRKI…FVIDSNQGRE (128 aa). A C4-type zinc finger spans residues 186–210; that stretch reads CCDCGSTATVEWVSINLLCILCIKC.

It is found in the cytoplasm. In terms of biological role, GTPase-activating protein (GAP) for the ADP ribosylation factors ARF1 and ARF2. May be involved in the endocytic pathway. In Saccharomyces cerevisiae (strain ATCC 204508 / S288c) (Baker's yeast), this protein is ADP-ribosylation factor GTPase-activating protein effector protein 1 (AGE1).